The sequence spans 377 residues: Alkane 1-monooxygenase 2 (377 aa).

4 helical membrane passes run 17–37 (GYWIWLIAVLGIPLSYWWSLG), 43–63 (AWPWLVISVVFGLIPILDAIV), 87–107 (VLSLATVPLLLGMLVWSGWIL), and 116–136 (VGQLGWILSVGTVMGAIGITV). Fe cation is bound by residues H138, H142, H168, H172, and H173. Residues 236 to 256 (ALFLLGFSLAFGWLGAIFFLG) form a helical membrane-spanning segment. 3 residues coordinate Fe cation: H312, H315, and H316.

The protein belongs to the fatty acid desaturase type 1 family. AlkB subfamily. Fe(3+) is required as a cofactor.

It localises to the cell inner membrane. The catalysed reaction is octane + 2 reduced [rubredoxin] + O2 + 2 H(+) = 2 oxidized [rubredoxin] + octan-1-ol + H2O. Its pathway is hydrocarbon metabolism; alkane degradation. Functionally, catalyzes the hydroxylation of n-alkanes in the presence of a NADH-rubredoxin reductase and rubredoxin. It preferably hydroxylases C12-C20 hydrocarbons. This is Alkane 1-monooxygenase 2 (alkB2) from Pseudomonas aeruginosa (strain ATCC 15692 / DSM 22644 / CIP 104116 / JCM 14847 / LMG 12228 / 1C / PRS 101 / PAO1).